The sequence spans 396 residues: Elongation factor Tu (396 aa).

Positions 10–206 constitute a tr-type G domain; the sequence is KPHVNVGTIG…ALDSYIPDPE (197 aa). The interval 19 to 26 is G1; it reads GHVDHGKT. Residue 19–26 participates in GTP binding; it reads GHVDHGKT. Threonine 26 is a Mg(2+) binding site. The tract at residues 60–64 is G2; sequence GITIN. Residues 81-84 are G3; sequence DCPG. Residues 81–85 and 136–139 contribute to the GTP site; these read DCPGH and NKCD. A G4 region spans residues 136-139; it reads NKCD. Positions 174–176 are G5; sequence SAL.

This sequence belongs to the TRAFAC class translation factor GTPase superfamily. Classic translation factor GTPase family. EF-Tu/EF-1A subfamily. Monomer.

Its subcellular location is the cytoplasm. It catalyses the reaction GTP + H2O = GDP + phosphate + H(+). Its function is as follows. GTP hydrolase that promotes the GTP-dependent binding of aminoacyl-tRNA to the A-site of ribosomes during protein biosynthesis. The chain is Elongation factor Tu from Dechloromonas aromatica (strain RCB).